A 473-amino-acid chain; its full sequence is Cholesterol 22-monohydroxylase CYP90B52 (473 aa).

A helical membrane pass occupies residues 2 to 22; it reads EGLLLLLPTAIIALYLYISLI. Heme is bound at residue cysteine 422.

The protein belongs to the cytochrome P450 family. In terms of tissue distribution, mainly expressed in leaves and roots and, at low levels, in fruits and stems.

It is found in the membrane. It catalyses the reaction cholesterol + reduced [NADPH--hemoprotein reductase] + O2 = (22S)-22-hydroxycholesterol + oxidized [NADPH--hemoprotein reductase] + H2O + H(+). It functions in the pathway steroid metabolism; cholesterol metabolism. Canonical brassinosteroid (BR)-biosynthetic enzyme capable of converting cholesterol to 22S-hydroxycholesterol via sterol-C22 hydroxylation. This Paris polyphylla (Daiswa polyphylla) protein is Cholesterol 22-monohydroxylase CYP90B52.